The chain runs to 333 residues: Cytochrome f (333 aa).

The signal sequence occupies residues Met1–Ala44. Heme-binding residues include Tyr45, Cys66, Cys69, and His70. The chain crosses the membrane as a helical span at residues Val299–Leu318.

It belongs to the cytochrome f family. In terms of assembly, the 4 large subunits of the cytochrome b6-f complex are cytochrome b6, subunit IV (17 kDa polypeptide, PetD), cytochrome f and the Rieske protein, while the 4 small subunits are PetG, PetL, PetM and PetN. The complex functions as a dimer. Heme is required as a cofactor.

The protein resides in the cellular thylakoid membrane. Functionally, component of the cytochrome b6-f complex, which mediates electron transfer between photosystem II (PSII) and photosystem I (PSI), cyclic electron flow around PSI, and state transitions. The polypeptide is Cytochrome f (Trichormus variabilis (strain ATCC 29413 / PCC 7937) (Anabaena variabilis)).